A 92-amino-acid polypeptide reads, in one-letter code: MKLAAIFLASSVLLSLLPIHLSQGEAAGERRQWCPSKQQVFRGSCSDDGGQKCLNDLLWTWNPSVRLSPIYCDCTPKRHNKRLCDCPSMICL.

The first 24 residues, methionine 1–glycine 24, serve as a signal peptide directing secretion. Intrachain disulfides connect cysteine 34–cysteine 91, cysteine 45–cysteine 74, cysteine 53–cysteine 84, and cysteine 72–cysteine 86.

It belongs to the DEFL family.

It is found in the secreted. This chain is Defensin-like protein 249 (SCRL7), found in Arabidopsis thaliana (Mouse-ear cress).